A 403-amino-acid polypeptide reads, in one-letter code: Argininosuccinate synthase (403 aa).

ATP-binding positions include 12 to 20 (AYSGGLDTS) and A39. L-citrulline contacts are provided by Y90 and S95. Residue G120 coordinates ATP. T122, N126, and D127 together coordinate L-aspartate. Residue N126 participates in L-citrulline binding. The L-citrulline site is built by R130, S182, S191, E267, and Y279.

Belongs to the argininosuccinate synthase family. Type 1 subfamily. Homotetramer.

The protein resides in the cytoplasm. It carries out the reaction L-citrulline + L-aspartate + ATP = 2-(N(omega)-L-arginino)succinate + AMP + diphosphate + H(+). It participates in amino-acid biosynthesis; L-arginine biosynthesis; L-arginine from L-ornithine and carbamoyl phosphate: step 2/3. This is Argininosuccinate synthase from Ruthia magnifica subsp. Calyptogena magnifica.